The primary structure comprises 130 residues: Secreted cysteine-rich effector 2 (130 aa).

Positions 1–23 (MLINAARLLLPAAALVHLSLAWA) are cleaved as a signal peptide. Positions 68-85 (LKNGEDWCKHCASPRVSV) are plant immunity suppression domain.

The protein resides in the secreted. The protein localises to the host cell. It is found in the host periplasm. Its function is as follows. Secreted effector required for full virulence of U.virens. Inhibits host pathogen-associated molecular pattern-triggered immunity including flg22- and chitin-induced defense gene expression and oxidative burst. The chain is Secreted cysteine-rich effector 2 from Ustilaginoidea virens (Rice false smut fungus).